A 441-amino-acid polypeptide reads, in one-letter code: Maltose-6'-phosphate glucosidase MalH (441 aa).

4–70 lines the NAD(+) pocket; sequence FSVVIAGGGS…PEIEFLATTN (67 aa). Residues Arg-93 and Asn-147 each coordinate substrate. Position 169 (Cys-169) interacts with Mn(2+). The active-site Proton donor is Asp-170. His-200 contacts Mn(2+). Tyr-264 functions as the Proton acceptor in the catalytic mechanism. Arg-284 provides a ligand contact to substrate.

As to quaternary structure, homotetramer. It depends on NAD(+) as a cofactor. Mn(2+) serves as cofactor.

It catalyses the reaction alpha-maltose 6'-phosphate + H2O = D-glucose 6-phosphate + D-glucose. In terms of biological role, catalyzes the hydrolysis of O-alpha-linked disaccharide 6-phosphates, including maltose-6'P and all five phosphorylated isomers of sucrose, but not sucrose-6P. Does not hydrolyze beta-linked disaccharide 6-phosphates such as cellobiose-6'P and gentiobiose-6'P. Is involved in the dissimilation of maltose and related O-alpha-linked glucosides produced via the phosphoenolpyruvate-dependent sugar phosphotransferase system (PEP-PTS). The sequence is that of Maltose-6'-phosphate glucosidase MalH (malH) from Clostridium acetobutylicum (strain ATCC 824 / DSM 792 / JCM 1419 / IAM 19013 / LMG 5710 / NBRC 13948 / NRRL B-527 / VKM B-1787 / 2291 / W).